The following is a 2234-amino-acid chain: RNA-directed RNA polymerase L (2234 aa).

The segment at 26–283 is endonuclease; the sequence is ITVVTSQTEM…INLSDEKLSC (258 aa). Mn(2+)-binding residues include glutamate 51, aspartate 89, and glutamate 102. Residue lysine 115 is part of the active site. A compositionally biased stretch (basic and acidic residues) spans 879 to 891; it reads KRDDHMKDSEDSK. Disordered stretches follow at residues 879 to 898 and 927 to 949; these read KRDDHMKDSEDSKQNLSSDL and KLKEKTEARQSSSGSSLKNQQKR. Residues 935–945 show a composition bias toward polar residues; sequence RQSSSGSSLKN. In terms of domain architecture, RdRp catalytic spans 1184–1383; that stretch reads MEMKMSVNLG…FISSKFNKFV (200 aa). Aspartate 1342 is a Mg(2+) binding site.

Belongs to the Bunyavirales RNA polymerase family. As to quaternary structure, homomultimer; the oligomeric structure is essential for the polymerase activity. Interacts with nucleoprotein N. Interacts with protein Z; this interaction inhibits viral transcription and replication, Z partially blocks the product exit tunnel for the releasing nascent RNA product. The cofactor is Mn(2+). Mg(2+) serves as cofactor.

The protein resides in the virion. It localises to the host cytoplasm. It carries out the reaction RNA(n) + a ribonucleoside 5'-triphosphate = RNA(n+1) + diphosphate. RNA-dependent RNA polymerase, which is responsible for the replication and transcription of the viral RNA genome using antigenomic RNA as an intermediate. During transcription, synthesizes subgenomic RNAs and assures their capping by a cap-snatching mechanism, which involves the endonuclease activity cleaving the host capped pre-mRNAs. These short capped RNAs are then used as primers for viral transcription. The 3'-end of subgenomic mRNAs molecules are heterogeneous and not polyadenylated. The replicase function is to direct synthesis of antigenomic and genomic RNA which are encapsidated and non capped. As a consequence of the use of the same enzyme for both transcription and replication, these mechanisms need to be well coordinated. These processes may be regulated by proteins N and Z in a dose-dependent manner. Z protein inhibits the viral polymerase L und thus the viral transcription and RNA synthesis. The protein is RNA-directed RNA polymerase L of Bolomys (OLVV).